We begin with the raw amino-acid sequence, 125 residues long: Evasin P672 (125 aa).

Positions Met-1 to Ala-21 are cleaved as a signal peptide. Residues Asn-35, Asn-55, Asn-65, Asn-72, Asn-78, Asn-104, Asn-112, and Asn-118 are each glycosylated (N-linked (GlcNAc...) asparagine). 3 cysteine pairs are disulfide-bonded: Cys-70–Cys-110, Cys-87–Cys-115, and Cys-105–Cys-124.

The protein resides in the secreted. In terms of biological role, salivary chemokine-binding protein which has chemokine-neutralizing activity and binds to host chemokines CCL1, CCL2, CCL3, CCL3L1, CCL7, CCL8, CCL11, CCL12, CCL13, CCL14, CCL15, CCL16, CCL18 and CCL23. Binds to CCL8 with 1:1 stoichiometry and disrupts CCL8 homodimer formation. This Rhipicephalus pulchellus (Yellow backed tick) protein is Evasin P672.